Consider the following 360-residue polypeptide: Peptide chain release factor 1 (360 aa).

Residue glutamine 236 is modified to N5-methylglutamine.

The protein belongs to the prokaryotic/mitochondrial release factor family. Post-translationally, methylated by PrmC. Methylation increases the termination efficiency of RF1.

It is found in the cytoplasm. Peptide chain release factor 1 directs the termination of translation in response to the peptide chain termination codons UAG and UAA. This chain is Peptide chain release factor 1, found in Limosilactobacillus fermentum (strain NBRC 3956 / LMG 18251) (Lactobacillus fermentum).